The sequence spans 427 residues: UDP-N-acetylglucosamine 1-carboxyvinyltransferase (427 aa).

Residue 22–23 participates in phosphoenolpyruvate binding; the sequence is KN. A UDP-N-acetyl-alpha-D-glucosamine-binding site is contributed by arginine 99. Residue cysteine 123 is the Proton donor of the active site. Cysteine 123 carries the post-translational modification 2-(S-cysteinyl)pyruvic acid O-phosphothioketal. Residues 128 to 132, aspartate 313, and isoleucine 335 contribute to the UDP-N-acetyl-alpha-D-glucosamine site; that span reads RPIDL.

This sequence belongs to the EPSP synthase family. MurA subfamily.

The protein localises to the cytoplasm. It catalyses the reaction phosphoenolpyruvate + UDP-N-acetyl-alpha-D-glucosamine = UDP-N-acetyl-3-O-(1-carboxyvinyl)-alpha-D-glucosamine + phosphate. It participates in cell wall biogenesis; peptidoglycan biosynthesis. Functionally, cell wall formation. Adds enolpyruvyl to UDP-N-acetylglucosamine. In Sphingopyxis alaskensis (strain DSM 13593 / LMG 18877 / RB2256) (Sphingomonas alaskensis), this protein is UDP-N-acetylglucosamine 1-carboxyvinyltransferase.